Here is a 479-residue protein sequence, read N- to C-terminus: Neuronal acetylcholine receptor subunit alpha-9 (479 aa).

A signal peptide spans 1–25 (MNRPHSCLSFCWMYFAASGIRAVET). Residues 26–237 (ANGKYAQKLF…TFTLLLKRRS (212 aa)) lie on the Extracellular side of the membrane. N-linked (GlcNAc...) asparagine glycosylation occurs at Asn-57. A disulfide bond links Cys-155 and Cys-169. The N-linked (GlcNAc...) asparagine glycan is linked to Asn-170. Ser-191 and Asp-193 together coordinate Na(+). An intrachain disulfide couples Cys-219 to Cys-220. Helical transmembrane passes span 238–262 (SFYIVNLLIPCVLISFLAPLSFYLP), 269–287 (VSLGVTILLAMTVFQLMVA), and 302–323 (YYIATMALITASTALTIMVMNI). Residues 324–457 (HFCGAEARPV…WKKVAKVIDR (134 aa)) lie on the Cytoplasmic side of the membrane. A helical membrane pass occupies residues 458–476 (FFMWIFFAMVFVMTVLIIA).

Belongs to the ligand-gated ion channel (TC 1.A.9) family. Acetylcholine receptor (TC 1.A.9.1) subfamily. Alpha-9/CHRNA9 sub-subfamily. Forms homo- or heterooligomeric channels in conjunction with CHRNA10. The native outer hair cell receptor may be composed of CHRNA9:CHRNA10 heterooligomers. Found in the stoichiometric form (CHRNA9)2:(CHRNA10)3. As to expression, detected in the nasal epithelium, in the outer hair cells of the cochlea, in the pars tuberalis of the hypophysis, and in the developing muscle of the tongue. Also expressed in the neurons of dorsal root ganglia.

Its subcellular location is the synaptic cell membrane. It localises to the cell membrane. It carries out the reaction Ca(2+)(in) = Ca(2+)(out). The enzyme catalyses Mg(2+)(in) = Mg(2+)(out). It catalyses the reaction K(+)(in) = K(+)(out). The catalysed reaction is Na(+)(in) = Na(+)(out). With respect to regulation, activated by a myriad of ligands such as acetylcholine. AChR activity is inhibited by the antagonist alpha-conotoxins RgIA and GeXXA, small disulfide-constrained peptides from cone snails. Its function is as follows. Component of neuronal acetylcholine receptors (nAChRs) that function as pentameric, ligand-gated cation channels with high calcium permeability among other activities. nAChRs are excitatory neurotrasnmitter receptors formed by a collection of nAChR subunits known to mediate synaptic transmission in the nervous system and the neuromuscular junction. Each nAchR subunit confers differential attributes to channel properties, including activation, deactivation and desensitization kinetics, pH sensitivity, cation permeability, and binding to allosteric modulators. Forms either homopentamers or heteropentamers with CHRNA10. Expressed in the inner ear, in sympathetic neurons and in other non-neuronal cells, such as skin keratinocytes and lymphocytes. nAChR formed by CHRNA9:CHRNA10 mediate central nervous system control of auditory and vestibular sensory processing. The channel is permeable to a range of divalent cations including calcium, the influx of which may activate a potassium current which hyperpolarizes the cell membrane. In the ear, mediates synaptic transmission between efferent olivocochlear fibers and hair cells of the cochlea, this may lead to a reduction in basilar membrane motion, altering the activity of auditory nerve fibers and reducing the range of dynamic hearing. This may protect against acoustic trauma. May also regulate keratinocyte adhesion. The protein is Neuronal acetylcholine receptor subunit alpha-9 (Chrna9) of Rattus norvegicus (Rat).